We begin with the raw amino-acid sequence, 453 residues long: Bifunctional protein GlmU (453 aa).

Positions 1-231 are pyrophosphorylase; the sequence is MERTCLAIIL…EVEMTGCNNR (231 aa). Residues 10–13, K24, Q77, 82–83, 105–107, G143, E157, N172, and N229 each bind UDP-N-acetyl-alpha-D-glucosamine; these read LAAG, GT, and YGD. Residue D107 participates in Mg(2+) binding. Mg(2+) is bound at residue N229. Residues 232 to 252 form a linker region; sequence AELAFIERLWQERRRHELMLS. The interval 253–453 is N-acetyltransferase; it reads GVTMIAPETV…AIKAAKKGSH (201 aa). Positions 318 and 336 each coordinate UDP-N-acetyl-alpha-D-glucosamine. H348 functions as the Proton acceptor in the catalytic mechanism. UDP-N-acetyl-alpha-D-glucosamine contacts are provided by Y351 and N362. Residues A365, 371–372, S390, S408, and R425 contribute to the acetyl-CoA site; that span reads NY.

The protein in the N-terminal section; belongs to the N-acetylglucosamine-1-phosphate uridyltransferase family. In the C-terminal section; belongs to the transferase hexapeptide repeat family. In terms of assembly, homotrimer. Mg(2+) serves as cofactor.

It is found in the cytoplasm. The catalysed reaction is alpha-D-glucosamine 1-phosphate + acetyl-CoA = N-acetyl-alpha-D-glucosamine 1-phosphate + CoA + H(+). The enzyme catalyses N-acetyl-alpha-D-glucosamine 1-phosphate + UTP + H(+) = UDP-N-acetyl-alpha-D-glucosamine + diphosphate. The protein operates within nucleotide-sugar biosynthesis; UDP-N-acetyl-alpha-D-glucosamine biosynthesis; N-acetyl-alpha-D-glucosamine 1-phosphate from alpha-D-glucosamine 6-phosphate (route II): step 2/2. It participates in nucleotide-sugar biosynthesis; UDP-N-acetyl-alpha-D-glucosamine biosynthesis; UDP-N-acetyl-alpha-D-glucosamine from N-acetyl-alpha-D-glucosamine 1-phosphate: step 1/1. Its pathway is bacterial outer membrane biogenesis; LPS lipid A biosynthesis. Catalyzes the last two sequential reactions in the de novo biosynthetic pathway for UDP-N-acetylglucosamine (UDP-GlcNAc). The C-terminal domain catalyzes the transfer of acetyl group from acetyl coenzyme A to glucosamine-1-phosphate (GlcN-1-P) to produce N-acetylglucosamine-1-phosphate (GlcNAc-1-P), which is converted into UDP-GlcNAc by the transfer of uridine 5-monophosphate (from uridine 5-triphosphate), a reaction catalyzed by the N-terminal domain. The sequence is that of Bifunctional protein GlmU from Rhizobium rhizogenes (strain K84 / ATCC BAA-868) (Agrobacterium radiobacter).